The chain runs to 676 residues: DNA-directed RNA polymerase subunit beta' (676 aa).

Zn(2+) contacts are provided by C69, C71, C87, and C90. Residues D485, D487, and D489 each contribute to the Mg(2+) site.

The protein belongs to the RNA polymerase beta' chain family. RpoC1 subfamily. In plastids the minimal PEP RNA polymerase catalytic core is composed of four subunits: alpha, beta, beta', and beta''. When a (nuclear-encoded) sigma factor is associated with the core the holoenzyme is formed, which can initiate transcription. Mg(2+) serves as cofactor. The cofactor is Zn(2+).

It is found in the plastid. The protein localises to the chloroplast. The enzyme catalyses RNA(n) + a ribonucleoside 5'-triphosphate = RNA(n+1) + diphosphate. In terms of biological role, DNA-dependent RNA polymerase catalyzes the transcription of DNA into RNA using the four ribonucleoside triphosphates as substrates. The polypeptide is DNA-directed RNA polymerase subunit beta' (Fagopyrum esculentum subsp. ancestrale (Wild buckwheat)).